A 365-amino-acid polypeptide reads, in one-letter code: Chorismate synthase (365 aa).

2 residues coordinate NADP(+): arginine 48 and arginine 54. Residues arginine 125–serine 127, asparagine 238–alanine 239, glycine 278, lysine 293–serine 297, and arginine 319 contribute to the FMN site.

This sequence belongs to the chorismate synthase family. As to quaternary structure, homotetramer. FMNH2 is required as a cofactor.

The enzyme catalyses 5-O-(1-carboxyvinyl)-3-phosphoshikimate = chorismate + phosphate. The protein operates within metabolic intermediate biosynthesis; chorismate biosynthesis; chorismate from D-erythrose 4-phosphate and phosphoenolpyruvate: step 7/7. Its function is as follows. Catalyzes the anti-1,4-elimination of the C-3 phosphate and the C-6 proR hydrogen from 5-enolpyruvylshikimate-3-phosphate (EPSP) to yield chorismate, which is the branch point compound that serves as the starting substrate for the three terminal pathways of aromatic amino acid biosynthesis. This reaction introduces a second double bond into the aromatic ring system. The chain is Chorismate synthase from Vesicomyosocius okutanii subsp. Calyptogena okutanii (strain HA).